Here is a 225-residue protein sequence, read N- to C-terminus: PKHD-type hydroxylase YbiX (225 aa).

In terms of domain architecture, Fe2OG dioxygenase spans 78 to 177 (TLSTPLFNRY…RVASFMWIQS (100 aa)). Fe cation is bound by residues His-96, Asp-98, and His-158. Arg-168 contacts 2-oxoglutarate.

The cofactor is Fe(2+). L-ascorbate serves as cofactor.

This chain is PKHD-type hydroxylase YbiX, found in Escherichia fergusonii (strain ATCC 35469 / DSM 13698 / CCUG 18766 / IAM 14443 / JCM 21226 / LMG 7866 / NBRC 102419 / NCTC 12128 / CDC 0568-73).